A 149-amino-acid chain; its full sequence is GATA transcription factor 15 (149 aa).

A compositionally biased stretch (basic and acidic residues) spans 1–10 (MLDPTEKVID). Disordered stretches follow at residues 1-41 (MLDP…NEKK) and 76-102 (RRTL…GDSL). The segment at 37–91 (SNEKKSCAICGTSKTPLWRGGPAGPKSLCNACGIRNRKKRRTLISNRSEDKKKKS) adopts a GATA-type zinc-finger fold.

It belongs to the type IV zinc-finger family. Class B subfamily.

It localises to the nucleus. Its function is as follows. Transcriptional regulator that specifically binds 5'-GATA-3' or 5'-GAT-3' motifs within gene promoters. The sequence is that of GATA transcription factor 15 (GATA15) from Arabidopsis thaliana (Mouse-ear cress).